The primary structure comprises 799 residues: E3 UFM1-protein ligase 1 homolog (799 aa).

The tract at residues 429–483 (TTTTTTTQPSKKKDNLINSDDDDNQDNNKKSSKGKNKKSKQQQSSIQKLINDSED) is disordered. Basic residues predominate over residues 458-468 (KSSKGKNKKSK). The span at 469-478 (QQQSSIQKLI) shows a compositional bias: low complexity.

Belongs to the UFL1 family.

Functionally, E3 UFM1-protein ligase that mediates ufmylation of target proteins. The protein is E3 UFM1-protein ligase 1 homolog of Dictyostelium discoideum (Social amoeba).